The chain runs to 286 residues: Small ribosomal subunit protein uS2 (286 aa).

A disordered region spans residues E213–S286. The span at S227–V241 shows a compositional bias: low complexity. Residues W244 to N270 are compositionally biased toward polar residues. The segment covering G274–S286 has biased composition (gly residues).

Belongs to the universal ribosomal protein uS2 family. Component of the small ribosomal subunit. Mature ribosomes consist of a small (40S) and a large (60S) subunit. The 40S subunit contains about 33 different proteins and 1 molecule of RNA (18S). The 60S subunit contains about 49 different proteins and 3 molecules of RNA (28S, 5.8S and 5S). Interacts with ribosomal protein S21.

The protein localises to the cytoplasm. In terms of biological role, required for the assembly and/or stability of the 40S ribosomal subunit. Required for the processing of the 20S rRNA-precursor to mature 18S rRNA in a late step of the maturation of 40S ribosomal subunits. This is Small ribosomal subunit protein uS2 from Trichoplax adhaerens (Trichoplax reptans).